A 423-amino-acid polypeptide reads, in one-letter code: Serine--tRNA ligase (423 aa).

An L-serine-binding site is contributed by threonine 230 to glutamate 232. Arginine 261–glutamate 263 contacts ATP. Position 284 (glutamate 284) interacts with L-serine. Glutamate 348–serine 351 provides a ligand contact to ATP. Residue serine 384 coordinates L-serine.

This sequence belongs to the class-II aminoacyl-tRNA synthetase family. Type-1 seryl-tRNA synthetase subfamily. In terms of assembly, homodimer. The tRNA molecule binds across the dimer.

The protein resides in the cytoplasm. The enzyme catalyses tRNA(Ser) + L-serine + ATP = L-seryl-tRNA(Ser) + AMP + diphosphate + H(+). The catalysed reaction is tRNA(Sec) + L-serine + ATP = L-seryl-tRNA(Sec) + AMP + diphosphate + H(+). The protein operates within aminoacyl-tRNA biosynthesis; selenocysteinyl-tRNA(Sec) biosynthesis; L-seryl-tRNA(Sec) from L-serine and tRNA(Sec): step 1/1. In terms of biological role, catalyzes the attachment of serine to tRNA(Ser). Is also able to aminoacylate tRNA(Sec) with serine, to form the misacylated tRNA L-seryl-tRNA(Sec), which will be further converted into selenocysteinyl-tRNA(Sec). This Thermoanaerobacter pseudethanolicus (strain ATCC 33223 / 39E) (Clostridium thermohydrosulfuricum) protein is Serine--tRNA ligase.